A 771-amino-acid chain; its full sequence is Signal transducer and activator of transcription 3 (771 aa).

Positions 150 to 162 match the Essential for nuclear import motif; sequence DVRKRVQDLEQKM. Residues 580–670 enclose the SH2 domain; that stretch reads WNEGYIMGFI…DATNILVSPL (91 aa). Phosphotyrosine is present on Y706.

The protein belongs to the transcription factor STAT family. Forms a homodimer or a heterodimer with a related family member, such as STAT1. Interacts with OCAD1.

It is found in the cytoplasm. Its subcellular location is the nucleus. Functionally, transcription factor that binds to the interleukin-6 (IL-6)-responsive elements identified in the promoters of various acute-phase protein genes. The protein is Signal transducer and activator of transcription 3 (STAT3) of Gallus gallus (Chicken).